We begin with the raw amino-acid sequence, 244 residues long: Adenosine 5'-phosphosulfate reductase (244 aa).

Residues Cys129, Cys130, Cys212, and Cys215 each coordinate [4Fe-4S] cluster. Cys240 acts as the Nucleophile; cysteine thiosulfonate intermediate in catalysis.

The protein belongs to the PAPS reductase family. CysH subfamily. [4Fe-4S] cluster serves as cofactor.

It localises to the cytoplasm. It carries out the reaction [thioredoxin]-disulfide + sulfite + AMP + 2 H(+) = adenosine 5'-phosphosulfate + [thioredoxin]-dithiol. Its pathway is sulfur metabolism; hydrogen sulfide biosynthesis; sulfite from sulfate. Functionally, catalyzes the formation of sulfite from adenosine 5'-phosphosulfate (APS) using thioredoxin as an electron donor. The protein is Adenosine 5'-phosphosulfate reductase of Neisseria meningitidis serogroup A / serotype 4A (strain DSM 15465 / Z2491).